Consider the following 225-residue polypeptide: NAD(P)H-quinone oxidoreductase subunit K, chloroplastic (225 aa).

Positions 43, 44, 108, and 139 each coordinate [4Fe-4S] cluster.

This sequence belongs to the complex I 20 kDa subunit family. NDH is composed of at least 16 different subunits, 5 of which are encoded in the nucleus. Requires [4Fe-4S] cluster as cofactor.

Its subcellular location is the plastid. It is found in the chloroplast thylakoid membrane. The catalysed reaction is a plastoquinone + NADH + (n+1) H(+)(in) = a plastoquinol + NAD(+) + n H(+)(out). It catalyses the reaction a plastoquinone + NADPH + (n+1) H(+)(in) = a plastoquinol + NADP(+) + n H(+)(out). Functionally, NDH shuttles electrons from NAD(P)H:plastoquinone, via FMN and iron-sulfur (Fe-S) centers, to quinones in the photosynthetic chain and possibly in a chloroplast respiratory chain. The immediate electron acceptor for the enzyme in this species is believed to be plastoquinone. Couples the redox reaction to proton translocation, and thus conserves the redox energy in a proton gradient. This is NAD(P)H-quinone oxidoreductase subunit K, chloroplastic from Liriodendron tulipifera (Tuliptree).